We begin with the raw amino-acid sequence, 285 residues long: Meiotically up-regulated gene 74 protein (285 aa).

The protein resides in the cytoplasm. In terms of biological role, has a role in meiosis. The chain is Meiotically up-regulated gene 74 protein (mug74) from Schizosaccharomyces pombe (strain 972 / ATCC 24843) (Fission yeast).